Consider the following 229-residue polypeptide: Lipoprotein-releasing system ATP-binding protein LolD (229 aa).

The ABC transporter domain maps to 6 to 229; that stretch reads LELDAIERTY…DGHLTPYVPA (224 aa). Residue 42–49 participates in ATP binding; the sequence is GPSGSGKS.

Belongs to the ABC transporter superfamily. Lipoprotein translocase (TC 3.A.1.125) family. The complex is composed of two ATP-binding proteins (LolD) and two transmembrane proteins (LolC and LolE).

The protein localises to the cell inner membrane. Its function is as follows. Part of the ABC transporter complex LolCDE involved in the translocation of mature outer membrane-directed lipoproteins, from the inner membrane to the periplasmic chaperone, LolA. Responsible for the formation of the LolA-lipoprotein complex in an ATP-dependent manner. The chain is Lipoprotein-releasing system ATP-binding protein LolD from Maricaulis maris (strain MCS10) (Caulobacter maris).